A 1117-amino-acid polypeptide reads, in one-letter code: Protocadherin-11 X-linked (1117 aa).

Residues 1 to 23 form the signal peptide; the sequence is MDLLSGTHIFAVLLACIVFQSGA. Residues 24-812 are Extracellular-facing; that stretch reads QEKNYTIREE…ASSPSSDYVK (789 aa). Residues N27 and N48 are each glycosylated (N-linked (GlcNAc...) asparagine). Cadherin domains lie at 27 to 139, 140 to 249, 250 to 355, 362 to 466, 467 to 570, 571 to 673, and 677 to 795; these read NYTI…APLF, PATV…RPVF, KENE…IPSI, NPIN…APVF, TQPF…SPVF, THNE…KPVF, and SSNY…TPVT. N344 carries an N-linked (GlcNAc...) asparagine glycan. A glycan (N-linked (GlcNAc...) asparagine) is linked at N553. Residues 813–833 traverse the membrane as a helical segment; that stretch reads IVVAIVAGTITVILVIFITAV. At 834 to 1117 the chain is on the cytoplasmic side; sequence VRCQQSPHLK…DGNSDPESGK (284 aa). Residues 1029–1039 are compositionally biased toward polar residues; that stretch reads TVEIWTHPQPQ. The interval 1029 to 1117 is disordered; it reads TVEIWTHPQP…DGNSDPESGK (89 aa).

As to expression, expressed in adrenal gland, brain, heart, kidney, lung, prostate, skeletal muscle, testis and thymus.

Its subcellular location is the cell membrane. Potential calcium-dependent cell-adhesion protein. The polypeptide is Protocadherin-11 X-linked (PCDH11X) (Sus scrofa (Pig)).